Consider the following 831-residue polypeptide: Multiphosphoryl transfer protein (831 aa).

The 90-residue stretch at 1–90 (MLTIQFLCPL…EYILVRFIDS (90 aa)) folds into the HPr domain. Catalysis depends on histidine 15, which acts as the Pros-phosphohistidine intermediate; for HPr activity. Histidine 15 is modified (phosphohistidine; by EI). The PTS EI stretch occupies residues 119–650 (GNVLASGVGV…AVKSQLRQLD (532 aa)). The Tele-phosphohistidine intermediate; for PTS EI activity role is filled by histidine 298. Phosphohistidine; by autocatalysis is present on histidine 298. Phosphoenolpyruvate contacts are provided by arginine 405 and arginine 441. Residues glutamate 540 and aspartate 564 each contribute to the Mg(2+) site. Residues 563–564 (ND) and arginine 574 contribute to the phosphoenolpyruvate site. The active-site Proton donor; for EI activity is the cysteine 611. Residues 685 to 828 (PLLALENIFV…QSILTLLETE (144 aa)) form the PTS EIIA type-2 domain. The active-site Tele-phosphohistidine intermediate; for PTS EIIA activity is histidine 747. Histidine 747 is subject to Phosphohistidine; by HPr.

The protein belongs to the PEP-utilizing enzyme family. Mg(2+) is required as a cofactor.

The protein resides in the cytoplasm. It carries out the reaction L-histidyl-[protein] + phosphoenolpyruvate = N(pros)-phospho-L-histidyl-[protein] + pyruvate. It catalyses the reaction D-fructose(out) + N(pros)-phospho-L-histidyl-[protein] = D-fructose 1-phosphate(in) + L-histidyl-[protein]. Its function is as follows. Multifunctional protein that includes general (non sugar-specific) and sugar-specific components of the phosphoenolpyruvate-dependent sugar phosphotransferase system (sugar PTS). This major carbohydrate active transport system catalyzes the phosphorylation of incoming sugar substrates concomitantly with their translocation across the cell membrane. The enzyme II FryABC PTS system is involved in fructose transport. The polypeptide is Multiphosphoryl transfer protein (fryA) (Shigella flexneri).